A 507-amino-acid chain; its full sequence is MITLTPGHLTLPQLRRIAREPVQLKLDPASFAKIDAGAKAVADIAAKGEPAYGINTGFGRLASTHIPHDQLELLQKNLVLSHAVGVGEPMARSSVRLLMALKLSSLGRGHSGIRREVMDALITLFNADVLPLIPVKGSVGASGDLAPLAHMSAVLLGVGEVFIRGERASALDGLRVAGLAPLTLQAKEGLALLNGTQASTALALDNMFAIEDLYRTALVAGALSVDAAAGSVKPFDARIHELRGHQGQIDAAASYRELLEGSPINQSHRDCDKVQDPYSLRCQPQVMGACLDQMRHAADVLLVEANAVSDNPLIFPDTGEVLSGGNFHAEPVAFAADNLALAAAEIGALAERRIALLIDATLSGLPPFLVKDGGVNSGFMIAHVTAAALASENKTLAHPASVDSLPTSANQEDHVSMATFAARKLADIADNTKHILAIELLAAAQGVDLRAPYHTSPKLAPVMETIRGKVAHYELDHYFAPDIAVIAKLVGERAFAKVAPFSFASEQ.

Residues 141-143 (ASG) constitute a cross-link (5-imidazolinone (Ala-Gly)). S142 is subject to 2,3-didehydroalanine (Ser).

The protein belongs to the PAL/histidase family. Contains an active site 4-methylidene-imidazol-5-one (MIO), which is formed autocatalytically by cyclization and dehydration of residues Ala-Ser-Gly.

Its subcellular location is the cytoplasm. The enzyme catalyses L-histidine = trans-urocanate + NH4(+). The protein operates within amino-acid degradation; L-histidine degradation into L-glutamate; N-formimidoyl-L-glutamate from L-histidine: step 1/3. The polypeptide is Histidine ammonia-lyase (Burkholderia orbicola (strain MC0-3)).